Here is a 726-residue protein sequence, read N- to C-terminus: MASRLVAGLQVLALAGTATAVLTWDEAYAKANTALARITQQDKVSLVSGIGWDKGPCVGNTAPVSAINYPQLCLQDGPTGVRFGTGVTAFTPGIQAASTWDVELMRQRGQFQAEEQKGCGVHVMLTPVAGALGKIPEGGRNWEGFGVDPYLAGIAMEVTIEGQQSVGVQATAKHYLLNEQELNRNTMSSNVDDRTLHELYLWPFADAVRANVASVMCSYNKINGSWACENEHAMQKLLKDELGFKGYVMSDWNAQHTTTGSANAGMDMTMPGSDFNGGNVLWGPQLNTAVNNNQVARTRLDDMARRVLAAWYLTEQDKGYPPINIRANVQGNHKENVRAVARDGIVLLKNDAGALPFKAPRRLAIVGSASVANPRGINSCVDRGCNEGALGMGWGSGTTNYPYFSAPADAIRARAQQDGATVTLSASDSTADVANTVRDADAAIVFLTSNSGEGYLLVDGSYGDRLNLDPLHNGNQLVQAVAQANKNTIVVVHSVGPLVLESILSTPGVTAVVWAGLPGQESGNALVDVLYGSVSPSGKLPYTIARATADYGTAIVPGDDNFPEGLFVDYRHFDRANIQPRFEFGYGLSYTNFTYSNIKVASTVRSGPATGPVVSGGRADLWETVATVTATVTNSGGVAGAEVAQLYVSYPKGGSVPETPPRQLRGFNKLKLAPGASGTATFNIRRRDLSYWHVGQQNWVVPAGAFGLEVGASSRDLRLKESITVV.

Residues methionine 1–alanine 20 form the signal peptide. N-linked (GlcNAc...) asparagine glycans are attached at residues asparagine 223 and asparagine 592.

It belongs to the glycosyl hydrolase 3 family.

The protein localises to the secreted. The enzyme catalyses Hydrolysis of terminal, non-reducing beta-D-glucosyl residues with release of beta-D-glucose.. It functions in the pathway glycan metabolism; cellulose degradation. In terms of biological role, beta-glucosidases are one of a number of cellulolytic enzymes involved in the degradation of cellulosic biomass. Catalyzes the last step releasing glucose from the inhibitory cellobiose. Has a broad substrate specificity but preferentially hydrolyzes highly polymerized 1,3- and 1,4-beta-glucans. The polypeptide is Beta-glucosidase cel3A (Pyricularia oryzae (strain 70-15 / ATCC MYA-4617 / FGSC 8958) (Rice blast fungus)).